The following is a 463-amino-acid chain: Mitochondrial dynamics protein MID51 (463 aa).

The Mitochondrial intermembrane portion of the chain corresponds to 1 to 23 (MAGAGERKGKKDDNGIGTAIDFV). The chain crosses the membrane as a helical span at residues 24–46 (LSNARLVLGVGGAAMLGIATLAV). Residues 47–463 (KRMYDRAISA…LSEPEVLLQT (417 aa)) are Cytoplasmic-facing. The tract at residues 49-195 (MYDRAISAPT…LSGSLYDDLQ (147 aa)) is dimerization. Ser-55, Ser-59, Ser-79, and Ser-94 each carry phosphoserine. Residues 57-79 (PTSPTRLSHSGKRSWEEPNWMGS) are disordered. Residues 104 to 123 (AFDTDTFCPPRPKPVARKGQ) are disordered. An important for interaction with DNM1L region spans residues 160-169 (AAVDICAELR). Positions 187, 189, and 201 each coordinate ADP. Residues 234 to 243 (RRENPEYFPR) are important for interaction with DNM1L. 3 residues coordinate ADP: Ser-340, Arg-342, and Lys-368.

Belongs to the MID49/MID51 family. Homodimer. Interacts with DNM1L.

It is found in the mitochondrion outer membrane. Its function is as follows. Mitochondrial outer membrane protein which regulates mitochondrial fission/fusion dynamics. Promotes the recruitment and association of the fission mediator dynamin-related protein 1 (DNM1L) to the mitochondrial surface independently of the mitochondrial fission FIS1 and MFF proteins. Regulates DNM1L GTPase activity and DNM1L oligomerization. Binds ADP and can also bind GDP, although with lower affinity. Does not bind CDP, UDP, ATP, AMP or GTP. Inhibits DNM1L GTPase activity in the absence of bound ADP. Requires ADP to stimulate DNM1L GTPase activity and the assembly of DNM1L into long, oligomeric tubules with a spiral pattern, as opposed to the ring-like DNM1L oligomers observed in the absence of bound ADP. Does not require ADP for its function in recruiting DNM1L. The polypeptide is Mitochondrial dynamics protein MID51 (MIEF1) (Pongo abelii (Sumatran orangutan)).